We begin with the raw amino-acid sequence, 281 residues long: Putative pyruvate, phosphate dikinase regulatory protein (281 aa).

150-157 (GVSRTSKT) serves as a coordination point for ADP.

The protein belongs to the pyruvate, phosphate/water dikinase regulatory protein family. PDRP subfamily.

It carries out the reaction N(tele)-phospho-L-histidyl/L-threonyl-[pyruvate, phosphate dikinase] + ADP = N(tele)-phospho-L-histidyl/O-phospho-L-threonyl-[pyruvate, phosphate dikinase] + AMP + H(+). The enzyme catalyses N(tele)-phospho-L-histidyl/O-phospho-L-threonyl-[pyruvate, phosphate dikinase] + phosphate + H(+) = N(tele)-phospho-L-histidyl/L-threonyl-[pyruvate, phosphate dikinase] + diphosphate. Functionally, bifunctional serine/threonine kinase and phosphorylase involved in the regulation of the pyruvate, phosphate dikinase (PPDK) by catalyzing its phosphorylation/dephosphorylation. This Sorangium cellulosum (strain So ce56) (Polyangium cellulosum (strain So ce56)) protein is Putative pyruvate, phosphate dikinase regulatory protein.